A 205-amino-acid chain; its full sequence is Thiamine-phosphate synthase (205 aa).

4-amino-2-methyl-5-(diphosphooxymethyl)pyrimidine is bound by residues 37 to 41 and Asn-69; that span reads QVREK. Residues Asp-70 and Asp-89 each contribute to the Mg(2+) site. Ser-108 provides a ligand contact to 4-amino-2-methyl-5-(diphosphooxymethyl)pyrimidine. A 2-[(2R,5Z)-2-carboxy-4-methylthiazol-5(2H)-ylidene]ethyl phosphate-binding site is contributed by 134–136; it reads TGS. Position 137 (Lys-137) interacts with 4-amino-2-methyl-5-(diphosphooxymethyl)pyrimidine. 2-[(2R,5Z)-2-carboxy-4-methylthiazol-5(2H)-ylidene]ethyl phosphate contacts are provided by residues Gly-165 and 185 to 186; that span reads IS.

It belongs to the thiamine-phosphate synthase family. Mg(2+) serves as cofactor.

It catalyses the reaction 2-[(2R,5Z)-2-carboxy-4-methylthiazol-5(2H)-ylidene]ethyl phosphate + 4-amino-2-methyl-5-(diphosphooxymethyl)pyrimidine + 2 H(+) = thiamine phosphate + CO2 + diphosphate. It carries out the reaction 2-(2-carboxy-4-methylthiazol-5-yl)ethyl phosphate + 4-amino-2-methyl-5-(diphosphooxymethyl)pyrimidine + 2 H(+) = thiamine phosphate + CO2 + diphosphate. The enzyme catalyses 4-methyl-5-(2-phosphooxyethyl)-thiazole + 4-amino-2-methyl-5-(diphosphooxymethyl)pyrimidine + H(+) = thiamine phosphate + diphosphate. Its pathway is cofactor biosynthesis; thiamine diphosphate biosynthesis; thiamine phosphate from 4-amino-2-methyl-5-diphosphomethylpyrimidine and 4-methyl-5-(2-phosphoethyl)-thiazole: step 1/1. Condenses 4-methyl-5-(beta-hydroxyethyl)thiazole monophosphate (THZ-P) and 2-methyl-4-amino-5-hydroxymethyl pyrimidine pyrophosphate (HMP-PP) to form thiamine monophosphate (TMP). This Clostridium botulinum (strain 657 / Type Ba4) protein is Thiamine-phosphate synthase.